Here is a 378-residue protein sequence, read N- to C-terminus: Tafazzin (378 aa).

Residues 1 to 137 (MFMVVCSNLR…RLRNPSKFWY (137 aa)) are Mitochondrial intermembrane-facing. The interval 46–112 (APEARPVPDE…DQDADPSLDV (67 aa)) is disordered. Over residues 51-67 (PVPDERYPGSQQDRKDI) the composition is skewed to basic and acidic residues. The stretch at 138 to 158 (VVSQFVVSAVGIFSKVVLMFL) is an intramembrane region. Residues 159–378 (NKPRVYNRER…ETEKLHRERN (220 aa)) lie on the Mitochondrial intermembrane side of the membrane. The HXXXXD motif signature appears at 188 to 193 (HYSCFD).

Belongs to the taffazin family. In terms of assembly, associates with multiple protein complexes. Association with large protein complexes occurs only in the presence of cardiolipin.

It localises to the mitochondrion outer membrane. It is found in the mitochondrion inner membrane. The protein localises to the mitochondrion. The protein resides in the mitochondrion membrane. Its subcellular location is the golgi apparatus membrane. It localises to the endoplasmic reticulum membrane. The enzyme catalyses 1'-[1,2-diacyl-sn-glycero-3-phospho],3'-[1-acyl-sn-glycero-3-phospho]-glycerol + a 1,2-diacyl-sn-glycero-3-phosphocholine = a cardiolipin + a 1-acyl-sn-glycero-3-phosphocholine. The catalysed reaction is 1'-[1,2-di-(9Z,12Z-octadecadienoyl)-sn-glycero-3-phospho]-3'-[1-(9Z,12Z-octadecadienoyl)-sn-glycero-3-phospho]-glycerol + 1-hexadecanoyl-2-(9Z,12Z-octadecadienoyl)-sn-glycero-3-phosphocholine = 1',3'-bis-[1,2-di-(9Z,12Z-octadecadienoyl)-sn-glycero-3-phospho]-glycerol + 1-hexadecanoyl-sn-glycero-3-phosphocholine. It catalyses the reaction 1'-[1,2-di-(9Z,12Z-octadecadienoyl)-sn-glycero-3-phospho]-3'-[2-(9Z,12Z-octadecadienoyl)-sn-glycero-3-phospho]-glycerol + 1-hexadecanoyl-2-(9Z,12Z-octadecadienoyl)-sn-glycero-3-phosphocholine = 1',3'-bis-[1,2-di-(9Z,12Z-octadecadienoyl)-sn-glycero-3-phospho]-glycerol + 1-hexadecanoyl-sn-glycero-3-phosphocholine. It carries out the reaction 1,2-di-(9Z,12Z-octadecadienoyl)-sn-glycero-3-phosphocholine + 1'-[1,2-di-(9Z,12Z-octadecadienoyl)-sn-glycero-3-phospho]-3'-[1-(9Z,12Z-octadecadienoyl)-sn-glycero-3-phospho]-glycerol = 1-(9Z,12Z)-octadecadienoyl-sn-glycero-3-phosphocholine + 1',3'-bis-[1,2-di-(9Z,12Z-octadecadienoyl)-sn-glycero-3-phospho]-glycerol. The enzyme catalyses 1-tetradecanoyl-sn-glycero-3-phosphocholine + 1',3'-bis-[1,2-di-(9Z,12Z-octadecadienoyl)-sn-glycero-3-phospho]-glycerol = 1-tetradecanoyl-2-(9Z,12Z-octadecadienoyl)-sn-glycero-3-phosphocholine + 1'-[1,2-di-(9Z,12Z-octadecadienoyl)-sn-glycero-3-phospho]-3'-[1-(9Z,12Z-octadecadienoyl)-sn-glycero-3-phospho]-glycerol. The catalysed reaction is 1',3'-bis[1,2-di-(9Z-octadecenoyl)-sn-glycero-3-phospho]-glycerol + 1-nonadecanoyl-sn-glycero-3-phosphocholine = 1-nonadecanoyl-2-(9Z-octadecenoyl)-sn-glycero-3-phosphocholine + 1'-[1,2-di-(9Z-octadecenoyl)-sn-glycero-3-phospho]-3'-[1-(9Z-octadecenoyl)-sn-glycero-3-phospho]-glycerol. It catalyses the reaction a 1,2-diacyl-sn-glycero-3-phospho-(1'-sn-glycerol) + a 1-acyl-sn-glycero-3-phosphocholine = 1-acyl-sn-glycero-3-phospho-(1'-sn-glycerol) + a 1,2-diacyl-sn-glycero-3-phosphocholine. It carries out the reaction 1-hexadecanoyl-2-(9Z,12Z-octadecadienoyl)-sn-glycero-3-phospho-(1'-sn-glycerol) + 1-hexadecanoyl-sn-glycero-3-phosphocholine = 1-hexadecanoyl-sn-glycero-3-phospho-(1'-sn-glycerol) + 1-hexadecanoyl-2-(9Z,12Z-octadecadienoyl)-sn-glycero-3-phosphocholine. The enzyme catalyses 1,2-di-(9Z-octadecenoyl)-sn-glycero-3-phospho-(1'-sn-glycerol) + 1-nonadecanoyl-sn-glycero-3-phosphocholine = 1-nonadecanoyl-2-(9Z-octadecenoyl)-sn-glycero-3-phosphocholine + 1-(9Z-octadecenoyl)-sn-glycero-3-phospho-(1'-sn-glycerol). The catalysed reaction is a 1,2-diacyl-sn-glycero-3-phosphate + a 1-acyl-sn-glycero-3-phosphocholine = a 1-acyl-sn-glycero-3-phosphate + a 1,2-diacyl-sn-glycero-3-phosphocholine. It catalyses the reaction 1-hexadecanoyl-2-(9Z,12Z-octadecadienoyl)-sn-glycero-3-phosphate + 1-hexadecanoyl-sn-glycero-3-phosphocholine = 1-hexadecanoyl-2-(9Z,12Z-octadecadienoyl)-sn-glycero-3-phosphocholine + 1-hexadecanoyl-sn-glycero-3-phosphate. It carries out the reaction 1-hexadecanoyl-2-(9Z,12Z-octadecadienoyl)-sn-glycero-3-phosphocholine + 1-(9Z-octadecenoyl)-sn-glycero-3-phosphate = 1-(9Z)-octadecenoyl-2-(9Z,12Z)-octadecadienoyl-sn-glycero-3-phosphate + 1-hexadecanoyl-sn-glycero-3-phosphocholine. The enzyme catalyses a 1-acyl-sn-glycero-3-phosphocholine + a 1,2-diacyl-sn-glycero-3-phosphoethanolamine = a 1-acyl-sn-glycero-3-phosphoethanolamine + a 1,2-diacyl-sn-glycero-3-phosphocholine. The catalysed reaction is 1-hexadecanoyl-2-(9Z,12Z-octadecadienoyl)-sn-glycero-3-phosphoethanolamine + 1-hexadecanoyl-sn-glycero-3-phosphocholine = 1-hexadecanoyl-2-(9Z,12Z-octadecadienoyl)-sn-glycero-3-phosphocholine + 1-hexadecanoyl-sn-glycero-3-phosphoethanolamine. It catalyses the reaction 1,2-di-(9Z,12Z-octadecadienoyl)-sn-glycero-3-phosphoethanolamine + 1-tetradecanoyl-sn-glycero-3-phosphocholine = 1-(9Z,12Z-octadecadienoyl)-sn-glycero-3-phosphoethanolamine + 1-tetradecanoyl-2-(9Z,12Z-octadecadienoyl)-sn-glycero-3-phosphocholine. It carries out the reaction 1'-[1,2-diacyl-sn-glycero-3-phospho],3'-[1-acyl-sn-glycero-3-phospho]-glycerol + a 1,2-diacyl-sn-glycero-3-phosphoethanolamine = a cardiolipin + a 1-acyl-sn-glycero-3-phosphoethanolamine. The enzyme catalyses 1-hexadecanoyl-2-(9Z,12Z-octadecadienoyl)-sn-glycero-3-phosphoethanolamine + 1'-[1,2-di-(9Z,12Z-octadecadienoyl)-sn-glycero-3-phospho]-3'-[1-(9Z,12Z-octadecadienoyl)-sn-glycero-3-phospho]-glycerol = 1',3'-bis-[1,2-di-(9Z,12Z-octadecadienoyl)-sn-glycero-3-phospho]-glycerol + 1-hexadecanoyl-sn-glycero-3-phosphoethanolamine. The catalysed reaction is 1'-[1-(9Z,12Z-octadecadienoyl)-2-(9Z-octadecenoyl)-sn-glycero-3-phospho]-3'-[1-(9Z,12Z-octadecadienoyl)-sn-glycero-3-phospho]-glycerol + 1',3'-bis-[1,2-di-(9Z,12Z-octadecadienoyl)-sn-glycero-3-phospho]-glycerol = 1'-[1,2-di-(9Z,12Z-octadecadienoyl)-sn-glycero-3-phospho]-3'-[1-(9Z,12Z-octadecadienoyl)-2-(9Z-octadecenoyl)-sn-glycero-3-phospho]-glycerol + 1'-[1,2-di-(9Z,12Z-octadecadienoyl)-sn-glycero-3-phospho]-3'-[1-(9Z,12Z-octadecadienoyl)-sn-glycero-3-phospho]-glycerol. It catalyses the reaction 1,2-di-(9Z-hexadecenoyl)-sn-glycero-3-phosphocholine + 1-hexadecanoyl-sn-glycero-3-phosphocholine = 1-hexadecanoyl-2-(9Z-hexadecenoyl)-sn-glycero-3-phosphocholine + 1-(9Z-hexadecenoyl)-sn-glycero-3-phosphocholine. It carries out the reaction 1,2-dioctadecanoyl-sn-glycero-3-phosphocholine + 1-hexadecanoyl-sn-glycero-3-phosphocholine = 1-hexadecanoyl-2-octadecanoyl-sn-glycero-3-phosphocholine + 1-octadecanoyl-sn-glycero-3-phosphocholine. The enzyme catalyses 1,2-di-(9Z-octadecenoyl)-sn-glycero-3-phosphocholine + 1-hexadecanoyl-sn-glycero-3-phosphocholine = 1-hexadecanoyl-2-(9Z-octadecenoyl)-sn-glycero-3-phosphocholine + 1-(9Z-octadecenoyl)-sn-glycero-3-phosphocholine. The catalysed reaction is 1,2-di-(9Z,12Z-octadecadienoyl)-sn-glycero-3-phosphocholine + 1-(9Z-octadecenoyl)-sn-glycero-3-phosphocholine = 1-(9Z)-octadecenoyl-2-(9Z,12Z)-octadecadienoyl-sn-glycero-3-phosphocholine + 1-(9Z,12Z)-octadecadienoyl-sn-glycero-3-phosphocholine. It catalyses the reaction 1,2-di-(9Z,12Z,15Z-octadecatrienoyl)-sn-glycero-3-phosphocholine + 1-tetradecanoyl-sn-glycero-3-phosphocholine = 1-tetradecanoyl-2-(9Z,12Z,15Z-octadecatrienoyl)-sn-glycero-3-phosphocholine + 1-(9Z,12Z,15Z-octadecatrienoyl)-sn-glycero-3-phosphocholine. It carries out the reaction 1-nonadecanoyl-sn-glycero-3-phosphocholine + 1-octadecanoyl-2-(9Z-octadecenoyl)-sn-glycero-3-phosphocholine = 1-nonadecanoyl-2-(9Z-octadecenoyl)-sn-glycero-3-phosphocholine + 1-octadecanoyl-sn-glycero-3-phosphocholine. The enzyme catalyses 1-(9Z)-octadecenoyl-2-octadecanoyl-sn-glycero-3-phosphocholine + 1-nonadecanoyl-sn-glycero-3-phosphocholine = 2-octadecanoyl-sn-glycero-3-phosphocholine + 1-nonadecanoyl-2-(9Z-octadecenoyl)-sn-glycero-3-phosphocholine. Its pathway is phospholipid metabolism. In terms of biological role, acyltransferase required to remodel newly synthesized phospholipid cardiolipin (1',3'-bis-[1,2-diacyl-sn-glycero-3-phospho]-glycerol or CL), a key component of the mitochondrial inner membrane, with tissue specific acyl chains necessary for adequate mitochondrial function. Its role in cellular physiology is to improve mitochondrial performance. CL is critical for the coassembly of lipids and proteins in mitochondrial membranes. For instance, remodeling of the acyl groups of CL in the mitochondrial inner membrane affects the assembly and stability of respiratory chain complex IV and its supercomplex forms. Catalyzes the transacylation between phospholipids and lysophospholipids, with the highest rate being between phosphatidylcholine (1,2-diacyl-sn-glycero-3-phosphocholine or PC) and CL. Catalyzes both 1-acyl-sn-glycero-3-phosphocholine (lysophosphatidylcholine or LPC) reacylation and PC-CL transacylation, that means, it exchanges acyl groups between CL and PC by a combination of forward and reverse transacylations. Also catalyzes transacylations between other phospholipids such as phosphatidylethanolamine (1,2-diacyl-sn-glycero-3-phosphoethanolamine or PE) and CL, between PC and PE, and between PC and phosphatidate (1,2-diacyl-sn-glycero-3-phosphate or PA), although at lower rate. Not regiospecific, it transfers acyl groups into any of the sn-1 and sn-2 positions of the monolysocardiolipin (MLCL), which is an important prerequisite for uniformity and symmetry in CL acyl distribution. Cannot transacylate dilysocardiolipin (DLCL), thus, the role of MLCL is limited to that of an acyl acceptor. CoA-independent, it can reshuffle molecular species within a single phospholipid class. Redistributes fatty acids between MLCL, CL, and other lipids, which prolongs the half-life of CL. Its action is completely reversible, which allows for cyclic changes, such as fission and fusion or bending and flattening of the membrane. Hence, by contributing to the flexibility of the lipid composition, it plays an important role in the dynamics of mitochondria membranes. Essential for the final stage of spermatogenesis, spermatid individualization. Required for the initiation of mitophagy. This Drosophila melanogaster (Fruit fly) protein is Tafazzin.